The sequence spans 267 residues: 14-3-3-like protein GF14 phi (267 aa).

Position 2 is an N-acetylalanine (A2). S73 and S196 each carry phosphoserine. A Phosphothreonine modification is found at T217. Residues 244–267 are disordered; that stretch reads MQDESPEEIKEAAAPKPAEEQKEI. Phosphoserine is present on S248. Positions 250 to 267 are enriched in basic and acidic residues; it reads EEIKEAAAPKPAEEQKEI.

This sequence belongs to the 14-3-3 family. As to quaternary structure, interacts with FD. Interacts with CINV1.

The protein localises to the nucleus. The protein resides in the cytoplasm. Functionally, is associated with a DNA binding complex that binds to the G box, a well-characterized cis-acting DNA regulatory element found in plant genes. This is 14-3-3-like protein GF14 phi (GRF4) from Arabidopsis thaliana (Mouse-ear cress).